Consider the following 1620-residue polypeptide: Probable serine/threonine-protein kinase gdt4 (1620 aa).

Residues 1-19 (MKLEQRIFFLICLVINSFS) form the signal peptide. The Extracellular segment spans residues 20–891 (NCSLLVAPDG…EVIGINEQLN (872 aa)). Residues 892–912 (ILAIVLPITISLFAAASILAG) form a helical membrane-spanning segment. At 913–1620 (YLVIKKYKKP…AKRNKKNQNQ (708 aa)) the chain is on the cytoplasmic side. Residues 1349–1604 (IVLEKYLSEG…TLIDLLEKLL (256 aa)) enclose the Protein kinase domain. ATP is bound by residues 1355 to 1363 (LSEGSFGVV) and K1376. The Proton acceptor role is filled by D1466.

The protein in the N-terminal section; belongs to the GDT family. This sequence in the C-terminal section; belongs to the protein kinase superfamily. TKL Ser/Thr protein kinase family.

The protein localises to the membrane. The enzyme catalyses L-seryl-[protein] + ATP = O-phospho-L-seryl-[protein] + ADP + H(+). It catalyses the reaction L-threonyl-[protein] + ATP = O-phospho-L-threonyl-[protein] + ADP + H(+). In Dictyostelium discoideum (Social amoeba), this protein is Probable serine/threonine-protein kinase gdt4 (gdt4).